The primary structure comprises 241 residues: Methylosome subunit pICln (241 aa).

A disordered region spans residues Glu-88 to Ile-112. Positions Gln-97–Ile-112 are enriched in acidic residues.

The protein belongs to the pICln (TC 1.A.47) family. As to quaternary structure, component of the methylosome, a 20S complex containing at least clns1a/picln, prmt5/skb1 and wdr77/mep50; may mediate snrpd1 and snrpd3 methylation. Forms a 6S pICln-Sm complex composed of clns1a/picln, snrpd1, snrpd2, snrpe, snrpf and snrpg; ring-like structure where clns1a/pICln mimics additional Sm proteins and which is unable to assemble into the core snRNP.

Its subcellular location is the cytoplasm. The protein localises to the cytosol. It is found in the nucleus. It localises to the cytoskeleton. Involved in both the assembly of spliceosomal snRNPs and the methylation of Sm proteins. Chaperone that regulates the assembly of spliceosomal U1, U2, U4 and U5 small nuclear ribonucleoproteins (snRNPs), the building blocks of the spliceosome, and thereby plays an important role in the splicing of cellular pre-mRNAs. Most spliceosomal snRNPs contain a common set of Sm proteins SNRPB, SNRPD1, SNRPD2, SNRPD3, SNRPE, SNRPF and SNRPG that assemble in a heptameric protein ring on the Sm site of the small nuclear RNA to form the core snRNP (Sm core). In the cytosol, the Sm proteins SNRPD1, SNRPD2, SNRPE, SNRPF and SNRPG are trapped in an inactive 6S pICln-Sm complex by the chaperone CLNS1A that controls the assembly of the core snRNP. Dissociation by the SMN complex of CLNS1A from the trapped Sm proteins and their transfer to an SMN-Sm complex triggers the assembly of core snRNPs and their transport to the nucleus. This chain is Methylosome subunit pICln (clns1a), found in Xenopus laevis (African clawed frog).